The chain runs to 721 residues: Polyribonucleotide nucleotidyltransferase (721 aa).

2 residues coordinate Mg(2+): Asp495 and Asp501. Residues 562 to 621 (PRLLSFRIDPELIGTVIGPGGRTIKGITERTNTKIDIEDSGIVTIASHDGAAADEAQKII) enclose the KH domain. The S1 motif domain maps to 631 to 699 (GEVFSGAITR…NRGRINLTLR (69 aa)). The tract at residues 700–721 (GVPQNGEEAEPAPAPTPVAPLN) is disordered. The segment covering 711-721 (APAPTPVAPLN) has biased composition (pro residues).

This sequence belongs to the polyribonucleotide nucleotidyltransferase family. It depends on Mg(2+) as a cofactor.

The protein localises to the cytoplasm. The catalysed reaction is RNA(n+1) + phosphate = RNA(n) + a ribonucleoside 5'-diphosphate. In terms of biological role, involved in mRNA degradation. Catalyzes the phosphorolysis of single-stranded polyribonucleotides processively in the 3'- to 5'-direction. The sequence is that of Polyribonucleotide nucleotidyltransferase from Synechococcus sp. (strain WH7803).